The following is a 291-amino-acid chain: Small ribosomal subunit biogenesis GTPase RsgA 1 (291 aa).

The CP-type G domain occupies 63–221; sequence ENALVRPPVA…VADTPGFSSI (159 aa). GTP is bound by residues 112 to 115 and 164 to 172; these read SKMD and GQSGVGKST. 4 residues coordinate Zn(2+): Cys245, Cys250, His252, and Cys258.

The protein belongs to the TRAFAC class YlqF/YawG GTPase family. RsgA subfamily. In terms of assembly, monomer. Associates with 30S ribosomal subunit, binds 16S rRNA. It depends on Zn(2+) as a cofactor.

The protein localises to the cytoplasm. Its function is as follows. One of several proteins that assist in the late maturation steps of the functional core of the 30S ribosomal subunit. Helps release RbfA from mature subunits. May play a role in the assembly of ribosomal proteins into the subunit. Circularly permuted GTPase that catalyzes slow GTP hydrolysis, GTPase activity is stimulated by the 30S ribosomal subunit. In Listeria monocytogenes serotype 4b (strain F2365), this protein is Small ribosomal subunit biogenesis GTPase RsgA 1.